The following is a 580-amino-acid chain: Protein O-linked-mannose beta-1,4-N-acetylglucosaminyltransferase 2 (580 aa).

At 1 to 4 the chain is on the cytoplasmic side; sequence MHLS. A helical; Signal-anchor for type II membrane protein transmembrane segment spans residues 5-25; the sequence is AVFNALLVSVLAAVLWKHVRL. Residues 26–580 are Lumenal-facing; it reads REHAATLEEE…PFADVLVCNT (555 aa). 2 N-linked (GlcNAc...) asparagine glycosylation sites follow: N99 and N276. Residues 488–580 enclose the Fibronectin type-III domain; it reads ARCQASVHGA…PFADVLVCNT (93 aa).

This sequence belongs to the glycosyltransferase 61 family. As to expression, highly expressed in the brain, muscle, heart, and kidney in both fetus and adult. In the brain, highest expression in the cortex and cerebellum. Highly expressed in the pancreas.

It localises to the endoplasmic reticulum membrane. The enzyme catalyses 3-O-(alpha-D-mannosyl)-L-threonyl-[protein] + UDP-N-acetyl-alpha-D-glucosamine = 3-O-(N-acetyl-beta-D-glucosaminyl-(1-&gt;4)-alpha-D-mannosyl)-L-threonyl-[protein] + UDP + H(+). It functions in the pathway protein modification; protein glycosylation. In terms of biological role, O-linked mannose beta-1,4-N-acetylglucosaminyltransferase that transfers UDP-N-acetyl-D-glucosamine to the 4-position of the mannose to generate N-acetyl-D-glucosamine-beta-1,4-O-D-mannosylprotein. Involved in the biosynthesis of the phosphorylated O-mannosyl trisaccharide (N-acetylgalactosamine-beta-3-N-acetylglucosamine-beta-4-(phosphate-6-)mannose), a carbohydrate structure present in alpha-dystroglycan (DAG1), which is required for binding laminin G-like domain-containing extracellular proteins with high affinity. The protein is Protein O-linked-mannose beta-1,4-N-acetylglucosaminyltransferase 2 (POMGNT2) of Homo sapiens (Human).